The sequence spans 782 residues: Probable methionine--tRNA ligase, cytoplasmic (782 aa).

A 'HIGH' region motif is present at residues 231 to 241; it reads PYVNNVPHLGN. The short motif at 551–555 is the 'KMSKS' region element; that stretch reads KFSKS.

The protein belongs to the class-I aminoacyl-tRNA synthetase family.

The protein localises to the cytoplasm. The enzyme catalyses tRNA(Met) + L-methionine + ATP = L-methionyl-tRNA(Met) + AMP + diphosphate. The protein is Probable methionine--tRNA ligase, cytoplasmic (rar1) of Schizosaccharomyces pombe (strain 972 / ATCC 24843) (Fission yeast).